We begin with the raw amino-acid sequence, 490 residues long: Stomatal closure-related actin-binding protein 3 (490 aa).

Belongs to the SCAB family. Expressed in roots, stems, leaves, siliques and flowers.

The protein resides in the cytoplasm. It is found in the cytoskeleton. In terms of biological role, probable plant-specific actin binding protein that bundles and stabilizes microfilaments (MFs). The protein is Stomatal closure-related actin-binding protein 3 of Arabidopsis thaliana (Mouse-ear cress).